Consider the following 333-residue polypeptide: MIKIALDAMGGDHAPMEIIRGARDAAQELGVHILLVGDQEKIQKELDGDEAGGLISIVHAPEVVGMEEHPVSAIRKKKNSSIVVATQLVKEGVADAVVSAGSTGAQMASSLFILGRISGVDRPAISTLLPTAKGVVVLLDAGANVDCRPKHLKQFAVMGSLYAERVLGLPSPKVGLVNIGAEETKGNELTIASYQMLQKTSINFVGNVEGRDLFLGGSDVAVCDGFVGNVILKSAEGLAMSILGMFKQELGRLEDIIGNERIMHMLGSFKRRMDYAEYGGAPLLGVNGVSVICHGSSRARAIKNALRVAKETVEQGLVPAIKESLENDKGVEE.

It belongs to the PlsX family. In terms of assembly, homodimer. Probably interacts with PlsY.

The protein localises to the cytoplasm. It carries out the reaction a fatty acyl-[ACP] + phosphate = an acyl phosphate + holo-[ACP]. It participates in lipid metabolism; phospholipid metabolism. Its function is as follows. Catalyzes the reversible formation of acyl-phosphate (acyl-PO(4)) from acyl-[acyl-carrier-protein] (acyl-ACP). This enzyme utilizes acyl-ACP as fatty acyl donor, but not acyl-CoA. This chain is Phosphate acyltransferase, found in Desulforamulus reducens (strain ATCC BAA-1160 / DSM 100696 / MI-1) (Desulfotomaculum reducens).